A 181-amino-acid chain; its full sequence is ATP synthase subunit delta (181 aa).

The protein belongs to the ATPase delta chain family. As to quaternary structure, F-type ATPases have 2 components, F(1) - the catalytic core - and F(0) - the membrane proton channel. F(1) has five subunits: alpha(3), beta(3), gamma(1), delta(1), epsilon(1). F(0) has three main subunits: a(1), b(2) and c(10-14). The alpha and beta chains form an alternating ring which encloses part of the gamma chain. F(1) is attached to F(0) by a central stalk formed by the gamma and epsilon chains, while a peripheral stalk is formed by the delta and b chains.

It localises to the cell inner membrane. F(1)F(0) ATP synthase produces ATP from ADP in the presence of a proton or sodium gradient. F-type ATPases consist of two structural domains, F(1) containing the extramembraneous catalytic core and F(0) containing the membrane proton channel, linked together by a central stalk and a peripheral stalk. During catalysis, ATP synthesis in the catalytic domain of F(1) is coupled via a rotary mechanism of the central stalk subunits to proton translocation. Its function is as follows. This protein is part of the stalk that links CF(0) to CF(1). It either transmits conformational changes from CF(0) to CF(1) or is implicated in proton conduction. The protein is ATP synthase subunit delta of Chlorobium limicola (strain DSM 245 / NBRC 103803 / 6330).